The sequence spans 485 residues: GTPase Der (485 aa).

EngA-type G domains are found at residues Pro-3–Glu-167 and Pro-176–Met-349. Residues Gly-9–Ser-16, Asp-56–Phe-60, Asn-119–Glu-122, Gly-182–Ser-189, Asp-229–Val-233, and Asn-294–Asp-297 each bind GTP. Residues Ile-350–Glu-434 enclose the KH-like domain. The interval Asn-435 to Lys-485 is disordered. A compositionally biased stretch (basic and acidic residues) spans Arg-457–Asn-469. The segment covering Arg-470 to Lys-485 has biased composition (basic residues).

Belongs to the TRAFAC class TrmE-Era-EngA-EngB-Septin-like GTPase superfamily. EngA (Der) GTPase family. Associates with the 50S ribosomal subunit.

Its function is as follows. GTPase that plays an essential role in the late steps of ribosome biogenesis. The polypeptide is GTPase Der (Neisseria meningitidis serogroup B (strain ATCC BAA-335 / MC58)).